The sequence spans 468 residues: MRIEHDFIGQMEISDEVYYGIQTLRASENFFITNDKLCSYPVFIKSFAQVKKAATLANVQLGLIDEKLKIAICHACDLLIDGKYHDQFIVDMIQGGAGTSTNMNMNEVIANLALEYMGHQKGEYQFCHPNDHVNRSQSTNDAYPSALKIAIYERLSNLVAPMKALRDAFAQKAKEFAHVIKMGRTQLQDAVPMTLGQEFETYALMVDRDIEQVLDARNWVRELNLGGTAIGTGINSHPDYRSLIEKKIQEVTGRPFVMANNLIEATQSTGAYVQVSGVLKRIAVKLSKVCNDLRLLSSGPRAGLNEINLPKMQPGSSIMPGKVNPVIPEVVNQVCFAVIGNDLSVALAAEGGQLQLNVFEPVIAYKLFHSFVILGRAIETLTTKCVEGITANEKICHDYVFNSIGIVTALNPHIGYEKSAMIAKEALKSDRSIYDIALEKKILTKEQLDDIFKPENMLSPHAFKKHKD.

5 residues coordinate L-aspartate: threonine 99, serine 138, threonine 139, asparagine 140, and threonine 185. The interval 315 to 324 is SS loop; the sequence is GSSIMPGKVN. Serine 316 serves as the catalytic Proton acceptor. 2 residues coordinate L-aspartate: serine 317 and lysine 322.

The protein belongs to the class-II fumarase/aspartase family. Aspartase subfamily. Homotetramer.

The enzyme catalyses L-aspartate = fumarate + NH4(+). Its function is as follows. Catalyzes the reversible conversion of L-aspartate to fumarate and ammonia. This is Aspartate ammonia-lyase (aspA) from Helicobacter pylori (strain ATCC 700392 / 26695) (Campylobacter pylori).